We begin with the raw amino-acid sequence, 93 residues long: Alpha-defensin 23 (93 aa).

The first 19 residues, 1-19, serve as a signal peptide directing secretion; that stretch reads MKTLVLLSALILLAFQVQA. The propeptide occupies 20-58; it reads DPIQNTDEETKTEEQPGKEDQAVSVSFGDPEGSSLQEES. A disordered region spans residues 24 to 54; sequence NTDEETKTEEQPGKEDQAVSVSFGDPEGSSL. A compositionally biased stretch (basic and acidic residues) spans 27–40; sequence EETKTEEQPGKEDQ. Cystine bridges form between Cys64–Cys92, Cys66–Cys81, and Cys71–Cys91.

This sequence belongs to the alpha-defensin family.

The protein localises to the secreted. In terms of biological role, may have microbicidal activities. This Mus musculus (Mouse) protein is Alpha-defensin 23 (Defa23).